Reading from the N-terminus, the 400-residue chain is Large envelope protein (400 aa).

Met-1 is subject to N-acetylmethionine. The N-myristoyl glycine; by host moiety is linked to residue Gly-2. Residues 2 to 119 are pre-S1; it reads GAPLSTTRRG…PPLRDTHPQA (118 aa). The pre-S stretch occupies residues 2–174; that stretch reads GAPLSTTRRG…FSKTGGPAMN (173 aa). The Virion surface; in external conformation segment spans residues 2–181; that stretch reads GAPLSTTRRG…AMNMDNITSG (180 aa). Residues 2 to 253 lie on the Intravirion; in internal conformation side of the membrane; sequence GAPLSTTRRG…PGYRWMCLRR (252 aa). N-linked (GlcNAc...) asparagine glycosylation is present at Pro-4. Residues 84-117 form a disordered region; it reads VLTTLPADPPPASTNRRSGRKPTPVSPPLRDTHP. The segment at 120–174 is pre-S2; sequence MQWNSTQFHQALLDPRVRALYFPAGGSSSGTQNPAPTIASLTSSIFSKTGGPAMN. Residues 182–202 form a helical membrane-spanning segment; that stretch reads LLGPLLVLQAVCFLLTKILTI. At 203–253 the chain is on the intravirion; in external conformation side; it reads PQSLDSWWTSLNFLGGLPGCPGQNSQSPTSNHLPTSCPPTCPGYRWMCLRR. Residues 254 to 274 form a helical membrane-spanning segment; sequence FIIFLFILLLCLIFLLVLLDY. At 275–348 the chain is on the virion surface side; that stretch reads QGMLPVCPLL…WASARFSWLS (74 aa). Asn-320 is a glycosylation site (N-linked (GlcNAc...) asparagine; by host). A helical transmembrane segment spans residues 349–369; the sequence is LLVQFVQWCVGLSPTVWLLVI. Over 370 to 375 the chain is Intravirion; the sequence is WMIWYW. A helical transmembrane segment spans residues 376-398; sequence GPNLCSILSPFIPLLPIFCYLWV. Residues 399 to 400 lie on the Virion surface side of the membrane; the sequence is SI.

This sequence belongs to the orthohepadnavirus major surface antigen family. In its internal form (Li-HBsAg), interacts with the capsid protein and with the isoform S. Interacts with host chaperone CANX. As to quaternary structure, associates with host chaperone CANX through its pre-S2 N glycan; this association may be essential for isoform M proper secretion. In terms of assembly, interacts with isoform L. Interacts with the antigens of satellite virus HDV (HDVAgs); this interaction is required for encapsidation of HDV genomic RNA. Isoform M is N-terminally acetylated by host at a ratio of 90%, and N-glycosylated by host at the pre-S2 region. Post-translationally, myristoylated.

Its subcellular location is the virion membrane. Functionally, the large envelope protein exists in two topological conformations, one which is termed 'external' or Le-HBsAg and the other 'internal' or Li-HBsAg. In its external conformation the protein attaches the virus to cell receptors and thereby initiating infection. This interaction determines the species specificity and liver tropism. This attachment induces virion internalization predominantly through caveolin-mediated endocytosis. The large envelope protein also assures fusion between virion membrane and endosomal membrane. In its internal conformation the protein plays a role in virion morphogenesis and mediates the contact with the nucleocapsid like a matrix protein. Its function is as follows. The middle envelope protein plays an important role in the budding of the virion. It is involved in the induction of budding in a nucleocapsid independent way. In this process the majority of envelope proteins bud to form subviral lipoprotein particles of 22 nm of diameter that do not contain a nucleocapsid. This Hepatitis B virus genotype F2 (isolate Brazil/w4B) (HBV-F) protein is Large envelope protein.